The chain runs to 360 residues: MRVDLFDFDLPDERIALRPAEPRDSARLLVVDPNAEMVLSDRQIRDLSSYLRPGDAIVFNDTKVIPAQLEGIRHREGAPGQQVSATLHMRAAPDRWKAFAKPGKRIKIGDRIQFGHGENVCALGALDAVVEEKGEGGEITLRFDLSGPALDEAIAAVGHIPLPPYIAAKRPEDERDRADYQTIYAREEGAVAAPTAGLHFTPSLFATLDAMGVERHFVTLHVGAGTFLPVKADDTEDHKMHFEIGHVDAATAEKLNAVKARGGRIVCVGTTSLRLLESAAAEDGTIKPWSGATGIFITPGYRFKTVDLLMTNFHLPRSTLFMLVSAFAGLDTMRAAYTHAIETGYRFYSYGDGSLLHRKD.

The protein belongs to the QueA family. Monomer.

The protein resides in the cytoplasm. It carries out the reaction 7-aminomethyl-7-carbaguanosine(34) in tRNA + S-adenosyl-L-methionine = epoxyqueuosine(34) in tRNA + adenine + L-methionine + 2 H(+). It functions in the pathway tRNA modification; tRNA-queuosine biosynthesis. Its function is as follows. Transfers and isomerizes the ribose moiety from AdoMet to the 7-aminomethyl group of 7-deazaguanine (preQ1-tRNA) to give epoxyqueuosine (oQ-tRNA). The protein is S-adenosylmethionine:tRNA ribosyltransferase-isomerase of Rhizobium rhizogenes (strain K84 / ATCC BAA-868) (Agrobacterium radiobacter).